A 605-amino-acid chain; its full sequence is Dolichyl-diphosphooligosaccharide--protein glycosyltransferase subunit 1 (605 aa).

A signal peptide spans methionine 1 to alanine 22. Topologically, residues serine 23–proline 437 are lumenal. Lysine 185 bears the N6-acetyllysine mark. The N-linked (GlcNAc...) asparagine glycan is linked to asparagine 297. A helical membrane pass occupies residues leucine 438–valine 455. Over arginine 456–leucine 605 the chain is Cytoplasmic. Lysine 536 is modified (N6-acetyllysine; alternate). Residue lysine 536 forms a Glycyl lysine isopeptide (Lys-Gly) (interchain with G-Cter in SUMO2); alternate linkage.

It belongs to the OST1 family. Component of the oligosaccharyltransferase (OST) complex. OST exists in two different complex forms which contain common core subunits RPN1, RPN2, OST48, OST4, DAD1 and TMEM258, either STT3A or STT3B as catalytic subunits, and form-specific accessory subunits. STT3A complex assembly occurs through the formation of 3 subcomplexes. Subcomplex 1 contains RPN1 and TMEM258, subcomplex 2 contains the STT3A-specific subunits STT3A, DC2/OSTC, and KCP2 as well as the core subunit OST4, and subcomplex 3 contains RPN2, DAD1, and OST48. The STT3A complex can form stable complexes with the Sec61 complex or with both the Sec61 and TRAP complexes. Interacts with TMEM35A/NACHO. Ubiquitinated by the ECS(ASB11) complex. In terms of processing, ufmylated by UFL1 in response to endoplasmic reticulum stress, promoting reticulophagy of endoplasmic reticulum sheets. As to expression, expressed in all tissues tested.

It localises to the endoplasmic reticulum membrane. Its pathway is protein modification; protein glycosylation. Subunit of the oligosaccharyl transferase (OST) complex that catalyzes the initial transfer of a defined glycan (Glc(3)Man(9)GlcNAc(2) in eukaryotes) from the lipid carrier dolichol-pyrophosphate to an asparagine residue within an Asn-X-Ser/Thr consensus motif in nascent polypeptide chains, the first step in protein N-glycosylation. N-glycosylation occurs cotranslationally and the complex associates with the Sec61 complex at the channel-forming translocon complex that mediates protein translocation across the endoplasmic reticulum (ER). All subunits are required for a maximal enzyme activity. The polypeptide is Dolichyl-diphosphooligosaccharide--protein glycosyltransferase subunit 1 (Rattus norvegicus (Rat)).